The sequence spans 298 residues: Acetylglutamate kinase (298 aa).

Residues 69–70 (GG), R91, and N196 contribute to the substrate site.

Belongs to the acetylglutamate kinase family. ArgB subfamily.

Its subcellular location is the cytoplasm. The enzyme catalyses N-acetyl-L-glutamate + ATP = N-acetyl-L-glutamyl 5-phosphate + ADP. The protein operates within amino-acid biosynthesis; L-arginine biosynthesis; N(2)-acetyl-L-ornithine from L-glutamate: step 2/4. Functionally, catalyzes the ATP-dependent phosphorylation of N-acetyl-L-glutamate. This Nitrobacter hamburgensis (strain DSM 10229 / NCIMB 13809 / X14) protein is Acetylglutamate kinase.